The following is a 217-amino-acid chain: Non-structural protein NS3 (217 aa).

Belongs to the orbivirus NS3 family.

Functionally, may play a role in the release of virions from infected cells. The sequence is that of Non-structural protein NS3 (Segment-10) from Camelus dromedarius (Dromedary).